Reading from the N-terminus, the 260-residue chain is Proteasome subunit alpha (260 aa).

The span at Ala237–Ser248 shows a compositional bias: low complexity. A disordered region spans residues Ala237–Pro260. Residues Val251–Pro260 show a composition bias toward basic and acidic residues.

It belongs to the peptidase T1A family. In terms of assembly, the 20S proteasome core is composed of 14 alpha and 14 beta subunits that assemble into four stacked heptameric rings, resulting in a barrel-shaped structure. The two inner rings, each composed of seven catalytic beta subunits, are sandwiched by two outer rings, each composed of seven alpha subunits. The catalytic chamber with the active sites is on the inside of the barrel. Has a gated structure, the ends of the cylinder being occluded by the N-termini of the alpha-subunits. Is capped by the proteasome-associated ATPase, ARC.

The protein localises to the cytoplasm. The protein operates within protein degradation; proteasomal Pup-dependent pathway. Its activity is regulated as follows. The formation of the proteasomal ATPase ARC-20S proteasome complex, likely via the docking of the C-termini of ARC into the intersubunit pockets in the alpha-rings, may trigger opening of the gate for substrate entry. Interconversion between the open-gate and close-gate conformations leads to a dynamic regulation of the 20S proteasome proteolysis activity. Functionally, component of the proteasome core, a large protease complex with broad specificity involved in protein degradation. The chain is Proteasome subunit alpha from Salinispora tropica (strain ATCC BAA-916 / DSM 44818 / JCM 13857 / NBRC 105044 / CNB-440).